The sequence spans 547 residues: Cytochrome P450 monooxygenase 81 (547 aa).

The next 2 membrane-spanning stretches (helical) occupy residues 6–23 and 106–124; these read IPTQ…LFLL and AFFA…ATAG. Cysteine 483 is a binding site for heme. 2 N-linked (GlcNAc...) asparagine glycosylation sites follow: asparagine 503 and asparagine 516.

Belongs to the cytochrome P450 family. Heme is required as a cofactor.

It localises to the membrane. It participates in secondary metabolite biosynthesis. Cytochrome P450 monooxygenase that is able to use dehydroabietic acid as a substrate for oxidation. The protein is Cytochrome P450 monooxygenase 81 of Postia placenta (strain ATCC 44394 / Madison 698-R) (Brown rot fungus).